Here is a 230-residue protein sequence, read N- to C-terminus: NAD(P)H-hydrate epimerase (230 aa).

Residues 11-223 (YAAADIRAAE…DVGLDLSGAT (213 aa)) form the YjeF N-terminal domain. (6S)-NADPHX is bound at residue 59–63 (NNGGD). K(+) is bound by residues N60 and D125. (6S)-NADPHX contacts are provided by residues 129–137 (GIGTTDSPA) and D165. S168 is a K(+) binding site.

The protein belongs to the NnrE/AIBP family. K(+) is required as a cofactor.

It carries out the reaction (6R)-NADHX = (6S)-NADHX. The enzyme catalyses (6R)-NADPHX = (6S)-NADPHX. Functionally, catalyzes the epimerization of the S- and R-forms of NAD(P)HX, a damaged form of NAD(P)H that is a result of enzymatic or heat-dependent hydration. This is a prerequisite for the S-specific NAD(P)H-hydrate dehydratase to allow the repair of both epimers of NAD(P)HX. The protein is NAD(P)H-hydrate epimerase of Clavibacter michiganensis subsp. michiganensis (strain NCPPB 382).